The sequence spans 329 residues: 4-hydroxythreonine-4-phosphate dehydrogenase (329 aa).

His-136 and Thr-137 together coordinate substrate. A divalent metal cation-binding residues include His-166, His-211, and His-266. Positions 274, 283, and 292 each coordinate substrate.

The protein belongs to the PdxA family. In terms of assembly, homodimer. Requires Zn(2+) as cofactor. The cofactor is Mg(2+). Co(2+) is required as a cofactor.

The protein resides in the cytoplasm. The catalysed reaction is 4-(phosphooxy)-L-threonine + NAD(+) = 3-amino-2-oxopropyl phosphate + CO2 + NADH. It participates in cofactor biosynthesis; pyridoxine 5'-phosphate biosynthesis; pyridoxine 5'-phosphate from D-erythrose 4-phosphate: step 4/5. Its function is as follows. Catalyzes the NAD(P)-dependent oxidation of 4-(phosphooxy)-L-threonine (HTP) into 2-amino-3-oxo-4-(phosphooxy)butyric acid which spontaneously decarboxylates to form 3-amino-2-oxopropyl phosphate (AHAP). The polypeptide is 4-hydroxythreonine-4-phosphate dehydrogenase (Escherichia coli O7:K1 (strain IAI39 / ExPEC)).